A 428-amino-acid chain; its full sequence is 3-phosphoshikimate 1-carboxyvinyltransferase (428 aa).

Positions 22, 23, and 27 each coordinate 3-phosphoshikimate. Lys22 serves as a coordination point for phosphoenolpyruvate. Residues Gly96 and Arg124 each contribute to the phosphoenolpyruvate site. Positions 169, 170, 171, 197, 313, 336, and 340 each coordinate 3-phosphoshikimate. Gln171 is a phosphoenolpyruvate binding site. The Proton acceptor role is filled by Asp313. Phosphoenolpyruvate is bound by residues Arg344, Arg386, and Lys411.

This sequence belongs to the EPSP synthase family. As to quaternary structure, monomer.

It localises to the cytoplasm. It carries out the reaction 3-phosphoshikimate + phosphoenolpyruvate = 5-O-(1-carboxyvinyl)-3-phosphoshikimate + phosphate. Its pathway is metabolic intermediate biosynthesis; chorismate biosynthesis; chorismate from D-erythrose 4-phosphate and phosphoenolpyruvate: step 6/7. Functionally, catalyzes the transfer of the enolpyruvyl moiety of phosphoenolpyruvate (PEP) to the 5-hydroxyl of shikimate-3-phosphate (S3P) to produce enolpyruvyl shikimate-3-phosphate and inorganic phosphate. This Xenorhabdus nematophila (strain ATCC 19061 / DSM 3370 / CCUG 14189 / LMG 1036 / NCIMB 9965 / AN6) protein is 3-phosphoshikimate 1-carboxyvinyltransferase.